The chain runs to 1251 residues: Botulinum neurotoxin type E (1251 aa).

His-212 contributes to the Zn(2+) binding site. The active site involves Glu-213. Zn(2+) contacts are provided by His-216 and Glu-251. A disulfide bond links Cys-412 and Cys-426. The interval 423 to 819 is translocation domain (TD); that stretch reads KSICIEINNG…ELNSMVIDTL (397 aa). The tract at residues 466 to 515 is belt; the sequence is NDLDQVILNFNSESAPGLSDEKLNLTIQNDAYIPKYDSNGTSDIEQHDVN. The segment at 845–1067 is N-terminus of receptor binding domain (N-RBD); sequence KRIKSSSVLN…EIQTLYNNEP (223 aa). The segment at 1068 to 1251 is C-terminus of receptor binding domain (C-RBD); the sequence is NANILKDFWG…ISEEHGWQEK (184 aa). The Host ganglioside-binding motif motif lies at 1221-1224; that stretch reads STWY.

This sequence belongs to the peptidase M27 family. In terms of assembly, heterodimer; disulfide-linked heterodimer of a light chain (LC) and a heavy chain (HC). The LC has the proteolytic/pharmacological activity, while the N- and C-terminal of the HC mediate channel formation and toxin binding, respectively. Interacts with host synaptic vesicle glycoproteins SV2A and SV2B which probably serve as coreceptors. Zn(2+) is required as a cofactor.

The protein resides in the secreted. It is found in the host cytoplasm. It localises to the host cytosol. Its subcellular location is the host synapse. The protein localises to the host presynaptic cell membrane. The protein resides in the host cytoplasmic vesicle. It is found in the host secretory vesicle. It localises to the host synaptic vesicle membrane. The catalysed reaction is Limited hydrolysis of proteins of the neuroexocytosis apparatus, synaptobrevins, SNAP25 or syntaxin. No detected action on small molecule substrates.. Botulinum toxin causes flaccid paralysis by inhibiting neurotransmitter (acetylcholine) release from the presynaptic membranes of nerve terminals of eukaryotic host skeletal and autonomic nervous system, with frequent heart or respiratory failure. Precursor of botulinum neurotoxin E which has 2 coreceptors; complex polysialylated gangliosides found on neural tissue and specific membrane-anchored proteins found in synaptic vesicles. Receptor proteins are exposed on host presynaptic cell membrane during neurotransmitter release, when the toxin heavy chain (HC) binds to them. Upon synaptic vesicle recycling the toxin is taken up via the endocytic pathway. When the pH of the toxin-containing endosome drops a structural rearrangement occurs so that the N-terminus of the HC forms pores that allows the light chain (LC) to translocate into the cytosol. Once in the cytosol the disulfide bond linking the 2 subunits is reduced and LC cleaves its target protein on synaptic vesicles, preventing their fusion with the cytoplasmic membrane and thus neurotransmitter release. Its function is as follows. Has proteolytic activity. After translocation into the eukaryotic host cytosol, LC hydrolyzes the '180-Arg-|-Ile-181' bond in SNAP25, blocking neurotransmitter release. In terms of biological role, responsible for host epithelial cell transcytosis, host nerve cell targeting and translocation of light chain (LC) into host cytosol. Composed of 3 subdomains; the translocation domain (TD), and N-terminus and C-terminus of the receptor-binding domain (RBD). The RBD is responsible for the adherence of the toxin to the cell surface. It simultaneously recognizes 2 coreceptors; host polysialated gangliosides and the receptor proteins SV2A and SV2B in close proximity on host synaptic vesicles. Interaction with SV2 proteins requires SV2 glycosylation. The N-terminus of the TD wraps an extended belt around the perimeter of the LC, protecting Zn(2+) in the active site; it may also prevent premature LC dissociation from the translocation channel and protect toxin prior to translocation. The TD inserts into synaptic vesicle membrane to allow translocation into the host cytosol. Binds ganglioside GD1a in vitro. In Clostridium butyricum, this protein is Botulinum neurotoxin type E.